A 159-amino-acid polypeptide reads, in one-letter code: uncharacterized protein (159 aa).

This is an uncharacterized protein from Methanocaldococcus jannaschii (strain ATCC 43067 / DSM 2661 / JAL-1 / JCM 10045 / NBRC 100440) (Methanococcus jannaschii).